Here is a 351-residue protein sequence, read N- to C-terminus: uncharacterized protein (351 aa).

Positions lysine 25–valine 67 are disordered. The span at proline 33–lysine 55 shows a compositional bias: low complexity.

This is an uncharacterized protein from Escherichia coli (strain K12).